A 2096-amino-acid chain; its full sequence is Tudor domain-containing protein 6 (2096 aa).

One can recognise a Tudor 1 domain in the interval 65-120 (ASASPGELCLVQVGLLWHRCRVVSRQAQESRVFLLDEGRTITAGAGSLAPGRREFF). The disordered stretch occupies residues 287–316 (YRGSTGTGDENSTSATWEEREESPDKPGSP). Polar residues predominate over residues 288–302 (RGSTGTGDENSTSAT). Position 293 is a phosphothreonine (Thr-293). Tudor domains are found at residues 310 to 369 (PDKP…YFRM), 536 to 593 (KPEP…FRQL), 816 to 875 (HQRN…FLKV), 1033 to 1088 (PLNP…AYDV), 1352 to 1411 (PLQR…NAIL), and 1567 to 1626 (CPYI…ELLS). Residues Ser-1722 and Ser-2062 each carry the phosphoserine modification. The region spanning 2026–2084 (AFTVGSKCVVWSSLRNTWSKCEILETAEEGTRVLNLSNGMEEIVNPENVWNGIPKLDKS) is the Tudor 8 domain.

In terms of assembly, found in a mRNP complex (i.e. messenger ribonucleoproteins which correspond to mRNA with bound proteins), at least composed of TDRD1, TDRD6, TDRD7 and DDX4. Found in a complex, at least composed of PIWIL1, PIWIL2, DDX4 and TDRD6. Interacts with Tex19.1 and probably Tex19.2. Interacts with PRMT5. Interacts with SNRPB (when methylated); to trigger spliceosome formation. In terms of processing, undergoes proteolytic cleavage near the C-terminal by an unknown protease during the transition from meiosis I to meiosis II in primary spermatocytes.

It is found in the cytoplasm. Functionally, tudor domain-containing protein involved in germ cell development, more specifically the formation of chromatoid body (during spermiogenesis), Balbiani body (during oogenesis), germ plasm (upon fertilization), and for proper miRNA expression and spliceosome maturation. Essential for RNA-dependent helicase UPF1 localization to chromatoid body, for UPF1-UPF2 and UPF1-DDX4 interactions which are required for mRNA degradation, using the extended 3' UTR-triggered nonsense-mediated mRNA decay (NMD) pathway. Involved in spliceosome maturation and mRNA splicing in prophase I spermatocytes through interaction with arginine N-methyltransferase PRMT5 and symmetrically arginine dimethylated SNRPB (small nuclear ribonucleoprotein-associated protein). The polypeptide is Tudor domain-containing protein 6 (Homo sapiens (Human)).